The primary structure comprises 474 residues: Dihydrolipoyl dehydrogenase (474 aa).

FAD is bound by residues 36-44, K53, and G119; that span reads EAKDMGGTC. The cysteines at positions 44 and 49 are disulfide-linked. Residues 184–188, E207, and 275–278 each bind NAD(+); these read GSGYI and ATGR. Positions 323 and 331 each coordinate FAD. The Proton acceptor role is filled by H459.

Belongs to the class-I pyridine nucleotide-disulfide oxidoreductase family. In terms of assembly, homodimer. FAD is required as a cofactor.

It is found in the cell inner membrane. It catalyses the reaction N(6)-[(R)-dihydrolipoyl]-L-lysyl-[protein] + NAD(+) = N(6)-[(R)-lipoyl]-L-lysyl-[protein] + NADH + H(+). Functionally, lipoamide dehydrogenase is a component of the alpha-ketoacid dehydrogenase complexes. This chain is Dihydrolipoyl dehydrogenase (lpdA), found in Synechocystis sp. (strain ATCC 27184 / PCC 6803 / Kazusa).